We begin with the raw amino-acid sequence, 247 residues long: UPF0280 protein MmarC7_0482 (247 aa).

Belongs to the UPF0280 family.

The protein is UPF0280 protein MmarC7_0482 of Methanococcus maripaludis (strain C7 / ATCC BAA-1331).